The primary structure comprises 95 residues: Small ribosomal subunit protein uS19 (95 aa).

Belongs to the universal ribosomal protein uS19 family.

Protein S19 forms a complex with S13 that binds strongly to the 16S ribosomal RNA. In Thermotoga sp. (strain RQ2), this protein is Small ribosomal subunit protein uS19.